The following is a 248-amino-acid chain: Ethylene-responsive transcription factor ERF026 (248 aa).

Positions 89-145 form a DNA-binding region, AP2/ERF; it reads VYRGIRCRSGKWVSEIREPKKTTRVWLGTYPTPEMAAAAYDVAALALKGGDTLLNFP. Residues 225–248 form a disordered region; it reads PPWMGSPPSDDSPENSDGESLWSY.

The protein belongs to the AP2/ERF transcription factor family. ERF subfamily.

Its subcellular location is the nucleus. Its function is as follows. Probably acts as a transcriptional activator. Binds to the GCC-box pathogenesis-related promoter element. May be involved in the regulation of gene expression by stress factors and by components of stress signal transduction pathways. The chain is Ethylene-responsive transcription factor ERF026 (ERF026) from Arabidopsis thaliana (Mouse-ear cress).